The primary structure comprises 450 residues: tRNA modification GTPase MnmE (450 aa).

Positions 26, 84, and 123 each coordinate (6S)-5-formyl-5,6,7,8-tetrahydrofolate. The 158-residue stretch at 219 to 376 folds into the TrmE-type G domain; the sequence is GMHVVLVGQP…LKAKLLEMIG (158 aa). Asn229 provides a ligand contact to K(+). GTP-binding positions include 229–234, 248–254, 273–276, and 357–359; these read NVGKSS, TDIAGTT, DTAG, and SAR. Ser233 serves as a coordination point for Mg(2+). K(+)-binding residues include Thr248, Ile250, and Thr253. Residue Thr254 coordinates Mg(2+). Lys450 provides a ligand contact to (6S)-5-formyl-5,6,7,8-tetrahydrofolate.

This sequence belongs to the TRAFAC class TrmE-Era-EngA-EngB-Septin-like GTPase superfamily. TrmE GTPase family. In terms of assembly, homodimer. Heterotetramer of two MnmE and two MnmG subunits. K(+) is required as a cofactor.

It localises to the cytoplasm. Its function is as follows. Exhibits a very high intrinsic GTPase hydrolysis rate. Involved in the addition of a carboxymethylaminomethyl (cmnm) group at the wobble position (U34) of certain tRNAs, forming tRNA-cmnm(5)s(2)U34. This is tRNA modification GTPase MnmE from Chromobacterium violaceum (strain ATCC 12472 / DSM 30191 / JCM 1249 / CCUG 213 / NBRC 12614 / NCIMB 9131 / NCTC 9757 / MK).